The primary structure comprises 315 residues: MQNRLTIKDIARLSGVGKSTVSRVLNNESGVSERTRERVEAVMNQHGFSPSRSARAMRGQSDKVVAIIVTRLDSLSENLAVQTMLPAFYEQGYDPIMMESQFSPTLVMEHLGMLRRRNIDGVVLFGFTGITEELIAPWKASLVLLARDAQGFASVCYDDEGAIHILMQRLYEQGHRNISFLGVPHSDITTGKRRHDAYLAFCKKHKLHPVAALPGLAMKQGYEHTASVIMPDTTALVCATDTLALGASKYLQEQRIETLQLASVGNTPLIKFLHPEIVTVDPGYAEAGRQAASQLIEQINGRCDPRRIVIPSTLA.

The 55-residue stretch at 5-59 (LTIKDIARLSGVGKSTVSRVLNNESGVSERTRERVEAVMNQHGFSPSRSARAMRG) folds into the HTH lacI-type domain. The H-T-H motif DNA-binding region spans 7–26 (IKDIARLSGVGKSTVSRVLN). Alpha,alpha-trehalose 6-phosphate-binding positions include 71–77 (RLDSLSE), glycine 126, arginine 147, 187–190 (DITT), arginine 194, threonine 242, and tyrosine 284.

In terms of assembly, homodimer.

In terms of biological role, repressor of the treBC operon. It is able to bind trehalose-6-phosphate. The protein is HTH-type transcriptional regulator TreR (treR) of Salmonella typhimurium (strain LT2 / SGSC1412 / ATCC 700720).